A 93-amino-acid polypeptide reads, in one-letter code: Small ribosomal subunit protein uS19 (93 aa).

Belongs to the universal ribosomal protein uS19 family.

Protein S19 forms a complex with S13 that binds strongly to the 16S ribosomal RNA. The chain is Small ribosomal subunit protein uS19 from Blochmanniella floridana.